We begin with the raw amino-acid sequence, 261 residues long: Hydroxyethylthiazole kinase (261 aa).

A substrate-binding site is contributed by methionine 40. Residues lysine 116 and threonine 162 each coordinate ATP. Glycine 189 contributes to the substrate binding site.

It belongs to the Thz kinase family. Requires Mg(2+) as cofactor.

It carries out the reaction 5-(2-hydroxyethyl)-4-methylthiazole + ATP = 4-methyl-5-(2-phosphooxyethyl)-thiazole + ADP + H(+). Its pathway is cofactor biosynthesis; thiamine diphosphate biosynthesis; 4-methyl-5-(2-phosphoethyl)-thiazole from 5-(2-hydroxyethyl)-4-methylthiazole: step 1/1. Functionally, catalyzes the phosphorylation of the hydroxyl group of 4-methyl-5-beta-hydroxyethylthiazole (THZ). This is Hydroxyethylthiazole kinase from Methanosarcina acetivorans (strain ATCC 35395 / DSM 2834 / JCM 12185 / C2A).